The chain runs to 545 residues: Chaperonin GroEL 2 (545 aa).

ATP-binding positions include 30–33 (TLGP), K51, 87–91 (DGTTT), G415, 479–481 (NAA), and D495.

Belongs to the chaperonin (HSP60) family. As to quaternary structure, forms a cylinder of 14 subunits composed of two heptameric rings stacked back-to-back. Interacts with the co-chaperonin GroES.

The protein resides in the cytoplasm. It catalyses the reaction ATP + H2O + a folded polypeptide = ADP + phosphate + an unfolded polypeptide.. Together with its co-chaperonin GroES, plays an essential role in assisting protein folding. The GroEL-GroES system forms a nano-cage that allows encapsulation of the non-native substrate proteins and provides a physical environment optimized to promote and accelerate protein folding. The sequence is that of Chaperonin GroEL 2 from Escherichia coli O1:K1 / APEC.